We begin with the raw amino-acid sequence, 196 residues long: CASP-like protein 2U1 (196 aa).

The Cytoplasmic portion of the chain corresponds to 1-11; it reads MAPMECVRRRN. A helical transmembrane segment spans residues 12 to 32; the sequence is VGELVLRCAATLVCMLSLMLL. Topologically, residues 33-58 are extracellular; that stretch reads VRDQQIAVQEVGVTSVTTQLRYSSST. The chain crosses the membrane as a helical span at residues 59 to 79; that stretch reads GLVYLVYANGLVALYCFVVVL. Residues 80 to 95 lie on the Cytoplasmic side of the membrane; sequence TSSFNGGSVMRRNKSG. The chain crosses the membrane as a helical span at residues 96–116; the sequence is AWALFVLDQVLACILLSAASA. Over 117-148 the chain is Extracellular; the sequence is ASEIAFLVEKGAKKTIWDSKCIVYGHFCRMLE. A helical transmembrane segment spans residues 149–169; it reads VSIATSFIAVIMLGSICVLSA. The Cytoplasmic portion of the chain corresponds to 170 to 196; it reads KQLFQQYTHYARIVNMVKLKSTPNSLL.

Belongs to the Casparian strip membrane proteins (CASP) family. In terms of assembly, homodimer and heterodimers.

Its subcellular location is the cell membrane. This chain is CASP-like protein 2U1, found in Pteridium aquilinum subsp. aquilinum (Bracken fern).